Consider the following 112-residue polypeptide: UPF0145 protein LAF_1635 (112 aa).

It belongs to the UPF0145 family.

This chain is UPF0145 protein LAF_1635, found in Limosilactobacillus fermentum (strain NBRC 3956 / LMG 18251) (Lactobacillus fermentum).